The following is a 163-amino-acid chain: Thiol peroxidase (163 aa).

Positions 16–162 constitute a Thioredoxin domain; the sequence is LQVGDTAHDF…YDAAIAAVKN (147 aa). The Cysteine sulfenic acid (-SOH) intermediate role is filled by C58. A disulfide bridge links C58 with C92.

Belongs to the peroxiredoxin family. Tpx subfamily. As to quaternary structure, homodimer.

It catalyses the reaction a hydroperoxide + [thioredoxin]-dithiol = an alcohol + [thioredoxin]-disulfide + H2O. Thiol-specific peroxidase that catalyzes the reduction of hydrogen peroxide and organic hydroperoxides to water and alcohols, respectively. Plays a role in cell protection against oxidative stress by detoxifying peroxides. The polypeptide is Thiol peroxidase (Streptococcus gordonii).